Here is a 296-residue protein sequence, read N- to C-terminus: 4-hydroxy-tetrahydrodipicolinate synthase (296 aa).

Position 46 (T46) interacts with pyruvate. The Proton donor/acceptor role is filled by Y134. K162 (schiff-base intermediate with substrate) is an active-site residue. Pyruvate is bound at residue I204.

Belongs to the DapA family. As to quaternary structure, homotetramer; dimer of dimers.

Its subcellular location is the cytoplasm. The enzyme catalyses L-aspartate 4-semialdehyde + pyruvate = (2S,4S)-4-hydroxy-2,3,4,5-tetrahydrodipicolinate + H2O + H(+). Its pathway is amino-acid biosynthesis; L-lysine biosynthesis via DAP pathway; (S)-tetrahydrodipicolinate from L-aspartate: step 3/4. In terms of biological role, catalyzes the condensation of (S)-aspartate-beta-semialdehyde [(S)-ASA] and pyruvate to 4-hydroxy-tetrahydrodipicolinate (HTPA). This Clostridium novyi (strain NT) protein is 4-hydroxy-tetrahydrodipicolinate synthase.